Here is a 248-residue protein sequence, read N- to C-terminus: MDADAPAGYRDPSGRHGAVTLPARPEPVAFDADATVLIVVDMQNAYATKGGYLDLAGFDVSATGPVIERIARAVAAARAAGIRVVWFQNGWDPDYVEAGGPGSPNWHKSNALKTMRLRPQMNQRLLAKGTWDYALVDALTPEPGDIVLPKPRYSGFYNTPLDSMLRARGIRTLVFTGIATNVCVESTLRDGYHREYFGIVLADATHQAGPPALQEGALRNIETFFGWVSDVAAFEAALSSDEARRIPA.

The active-site Proton acceptor is the aspartate 41. Lysine 150 is an active-site residue. Cysteine 183 acts as the Nucleophile in catalysis.

It belongs to the isochorismatase family. RutB subfamily.

It catalyses the reaction (Z)-3-ureidoacrylate + H2O + H(+) = (Z)-3-aminoacrylate + NH4(+) + CO2. The enzyme catalyses (Z)-3-ureidoacrylate + H2O = (Z)-3-aminoacrylate + carbamate + H(+). The catalysed reaction is (Z)-2-methylureidoacrylate + H2O + H(+) = (Z)-2-methylaminoacrylate + NH4(+) + CO2. Hydrolyzes ureidoacrylate to form aminoacrylate and carbamate. The carbamate hydrolyzes spontaneously, thereby releasing one of the nitrogen atoms of the pyrimidine ring as ammonia and one of its carbon atoms as CO2. This is Ureidoacrylate amidohydrolase RutB from Methylorubrum extorquens (strain ATCC 14718 / DSM 1338 / JCM 2805 / NCIMB 9133 / AM1) (Methylobacterium extorquens).